The following is a 347-amino-acid chain: NADH-ubiquinone oxidoreductase chain 2 (347 aa).

The next 9 membrane-spanning stretches (helical) occupy residues 5 to 22, 26 to 45, 60 to 80, 150 to 170, 178 to 198, 200 to 220, 237 to 257, 274 to 294, and 327 to 347; these read ILAIVMSTVISGTIMVLI, WLTIWIGFEMNMLAIIPILM, FLTQATASMLLMLGIIINLLL, NPNLLMAMAIMSVLVGGWGGL, ILAYSSIAHMGWMIAVTTYNP, LMLLNLTIYITMTLGTFMLFM, LPLIASLILMTMLSLGGLPPL, DMAIMATFMAMTALLNLYFYM, and PPLIMISTMLLPLTPMVLTLF.

Belongs to the complex I subunit 2 family. Core subunit of respiratory chain NADH dehydrogenase (Complex I) which is composed of 45 different subunits. Interacts with TMEM242.

The protein resides in the mitochondrion inner membrane. The enzyme catalyses a ubiquinone + NADH + 5 H(+)(in) = a ubiquinol + NAD(+) + 4 H(+)(out). Its function is as follows. Core subunit of the mitochondrial membrane respiratory chain NADH dehydrogenase (Complex I) which catalyzes electron transfer from NADH through the respiratory chain, using ubiquinone as an electron acceptor. Essential for the catalytic activity and assembly of complex I. This chain is NADH-ubiquinone oxidoreductase chain 2, found in Martes zibellina (Sable).